The sequence spans 612 residues: tRNA 5-methylaminomethyl-2-thiouridine biosynthesis bifunctional protein MnmC (612 aa).

Positions 1–218 (MITFRGDGLY…KREILEASLE (218 aa)) are tRNA (mnm(5)s(2)U34)-methyltransferase. The interval 244–612 (IGAGVAGLAA…VRKLKRGLVR (369 aa)) is FAD-dependent cmnm(5)s(2)U34 oxidoreductase.

It in the N-terminal section; belongs to the methyltransferase superfamily. tRNA (mnm(5)s(2)U34)-methyltransferase family. The protein in the C-terminal section; belongs to the DAO family. FAD is required as a cofactor.

The protein localises to the cytoplasm. It carries out the reaction 5-aminomethyl-2-thiouridine(34) in tRNA + S-adenosyl-L-methionine = 5-methylaminomethyl-2-thiouridine(34) in tRNA + S-adenosyl-L-homocysteine + H(+). Its function is as follows. Catalyzes the last two steps in the biosynthesis of 5-methylaminomethyl-2-thiouridine (mnm(5)s(2)U) at the wobble position (U34) in tRNA. Catalyzes the FAD-dependent demodification of cmnm(5)s(2)U34 to nm(5)s(2)U34, followed by the transfer of a methyl group from S-adenosyl-L-methionine to nm(5)s(2)U34, to form mnm(5)s(2)U34. The polypeptide is tRNA 5-methylaminomethyl-2-thiouridine biosynthesis bifunctional protein MnmC (Campylobacter fetus subsp. fetus (strain 82-40)).